Reading from the N-terminus, the 660-residue chain is MTNIIELPEVLANQIAAGEVVERPASVVKELVENAIDAKSSQITVEIEESGLKMIQVTDNGEGMSHEDLPLSLRRHATSKIKSQSDLFRIRTLGFRGEALPSVASISKITIKTATKEVTHGSLLIATGGEIETLEAISTPTGTKIKVENLFYNTPARLKYMKSLQAELAHIVDVVNRLSLAHPEVAFTLISDGRQLTQTSGTGDLRQAIAGIYGLNTTKKMLAISNADLDFEVSGYVSLPELTRANRNYMTILVNGRYIKNFLLNRAILDGYGSKLMVGRFPIVVIDIQIDPYLADVNVHPTKQEVRISKERELMALISTAISESLKEQDLIPDALENLAKSSTRHFSKPEQTQLPLQSRGLYYDPQKNDFFVKESAVSEKIPETDFYFGAVDNSVKVEKAELLPHSEEVIGPSSVKHASRPQNTFTETDHPNLDLKNRQKLSQMLNRLENEEKSVFPELDYFGQMHGTYLFAQGKDGLFIIDQHAAQERVKYEYYRDKIGEVDSSLQQLLVPYLFEFSGSDFINLQEKMALLNEVGIFLEVYGHNTFILREHPIWMKEEEIASGVYEMCDMLLLTNEVSIKTYRAELAIMMSCKRSIKANHSLDDYSARNLLLQLAQCQNPYNCPHGRPVLINFSKADMEKMFRRIQENHTSLRELGKY.

The segment at 414–433 is disordered; sequence SSVKHASRPQNTFTETDHPN.

Belongs to the DNA mismatch repair MutL/HexB family.

Functionally, this protein is involved in the repair of mismatches in DNA. It is required for dam-dependent methyl-directed DNA mismatch repair. May act as a 'molecular matchmaker', a protein that promotes the formation of a stable complex between two or more DNA-binding proteins in an ATP-dependent manner without itself being part of a final effector complex. The polypeptide is DNA mismatch repair protein MutL (Streptococcus pyogenes serotype M6 (strain ATCC BAA-946 / MGAS10394)).